A 606-amino-acid chain; its full sequence is Probable glutamine--fructose-6-phosphate aminotransferase [isomerizing] (606 aa).

Catalysis depends on Cys-2, which acts as the For GATase activity. Residues 2-224 (CGISACLNHT…DNDYGYITNN (223 aa)) form the Glutamine amidotransferase type-2 domain. SIS domains lie at 282 to 427 (FFPE…SLDN) and 458 to 596 (LLEF…PDYP).

It carries out the reaction D-fructose 6-phosphate + L-glutamine = D-glucosamine 6-phosphate + L-glutamate. It participates in nucleotide-sugar biosynthesis; UDP-N-acetyl-alpha-D-glucosamine biosynthesis; alpha-D-glucosamine 6-phosphate from D-fructose 6-phosphate: step 1/1. Functionally, controls the flux of glucose into the hexosamine pathway. Most likely involved in regulating the availability of precursors for glycosylation of proteins (Potential). This Acanthamoeba polyphaga (Amoeba) protein is Probable glutamine--fructose-6-phosphate aminotransferase [isomerizing].